A 65-amino-acid chain; its full sequence is Large ribosomal subunit protein uL29 (65 aa).

This sequence belongs to the universal ribosomal protein uL29 family.

This is Large ribosomal subunit protein uL29 from Acinetobacter baumannii (strain AB307-0294).